The primary structure comprises 260 residues: tRNA (guanine-N(7)-)-methyltransferase (260 aa).

The interval Met1 to His37 is disordered. Positions 90, 115, 142, and 165 each coordinate S-adenosyl-L-methionine. The active site involves Asp165. Substrate-binding positions include Lys169, Asp201, and Thr236–Glu239.

The protein belongs to the class I-like SAM-binding methyltransferase superfamily. TrmB family.

It carries out the reaction guanosine(46) in tRNA + S-adenosyl-L-methionine = N(7)-methylguanosine(46) in tRNA + S-adenosyl-L-homocysteine. Its pathway is tRNA modification; N(7)-methylguanine-tRNA biosynthesis. Functionally, catalyzes the formation of N(7)-methylguanine at position 46 (m7G46) in tRNA. This chain is tRNA (guanine-N(7)-)-methyltransferase, found in Paraburkholderia xenovorans (strain LB400).